Consider the following 243-residue polypeptide: Probable transcriptional regulatory protein LJ_0904 (243 aa).

Residues 1 to 22 are disordered; that stretch reads MSGHSKWHNIQGRKNAQDAKRG.

This sequence belongs to the TACO1 family.

Its subcellular location is the cytoplasm. The chain is Probable transcriptional regulatory protein LJ_0904 from Lactobacillus johnsonii (strain CNCM I-12250 / La1 / NCC 533).